Here is a 357-residue protein sequence, read N- to C-terminus: tRNA N6-adenosine threonylcarbamoyltransferase (357 aa).

2 residues coordinate Fe cation: His120 and His124. Substrate-binding positions include 143-147 (LVSGG), Asp176, Gly189, and Asn289. A Fe cation-binding site is contributed by Asp317.

It belongs to the KAE1 / TsaD family. It depends on Fe(2+) as a cofactor.

It localises to the cytoplasm. It catalyses the reaction L-threonylcarbamoyladenylate + adenosine(37) in tRNA = N(6)-L-threonylcarbamoyladenosine(37) in tRNA + AMP + H(+). Functionally, required for the formation of a threonylcarbamoyl group on adenosine at position 37 (t(6)A37) in tRNAs that read codons beginning with adenine. Is involved in the transfer of the threonylcarbamoyl moiety of threonylcarbamoyl-AMP (TC-AMP) to the N6 group of A37, together with TsaE and TsaB. TsaD likely plays a direct catalytic role in this reaction. The protein is tRNA N6-adenosine threonylcarbamoyltransferase of Polynucleobacter asymbioticus (strain DSM 18221 / CIP 109841 / QLW-P1DMWA-1) (Polynucleobacter necessarius subsp. asymbioticus).